Reading from the N-terminus, the 1002-residue chain is Carboxypeptidase Y (1002 aa).

Positions 1 to 18 (MLMKQTFLYFLLTCVVSA) are cleaved as a signal peptide. The propeptide occupies 19–521 (QFNGYVPPEQ…AYLEMLKAEG (503 aa)). Disordered regions lie at residues 51–91 (QEES…TALE), 124–436 (DEDE…NMQS), and 527–546 (AFRDQSHPAKPSNAQPADSS). 2 stretches are compositionally biased toward basic and acidic residues: residues 63 to 81 (PERDEAEAPHHPKGHHEFN) and 127 to 143 (EHVREKRPHDSADEDAP). Residues 144–170 (RRKHGKCKGKGKHHKGKHAKGKGKKSH) are compositionally biased toward basic residues. Residues 171 to 205 (PKPEDDSVFFDDERPKHHEFDDEDREFPAHHEPGE) are compositionally biased toward basic and acidic residues. 15 repeat units span residues 225-237 (MHHEPGEHMPPPP), 238-250 (MHHEPGEHMPPPP), 251-263 (MHHEPGEHMPPPP), 264-276 (MHHEPGEHMPPPP), 277-289 (MHHEPGEHMPPPP), 290-302 (MHHEPGEHMPPPP), 303-315 (MHHEPGEHMPPPP), 316-328 (MHHEPGEHMPPPP), 329-341 (MHHEPGEHMPPPP), 361-369 (DKEHHKGPK), 370-378 (DKEHHKGPK), 379-387 (DKEHHKGPK), 388-396 (DKEHHKGPK), 397-405 (DKEHHKGPK), and 406-414 (DKEHHKGPK). The 9 X 13 AA tandem repeats of M-H-H-E-P-G-E-H-M-P-P-P-P stretch occupies residues 225–341 (MHHEPGEHMP…EPGEHMPPPP (117 aa)). Residues 343 to 431 (KHHELEEHEG…PKEKHNERPE (89 aa)) are compositionally biased toward basic and acidic residues. Residues 361 to 423 (DKEHHKGPKD…KDKEHHQGPK (63 aa)) are 7 X 9 AA tandem repeats of D-K-E-H-H-K-G-P-K. Residues 415 to 423 (DKEHHQGPK) form a 2-7; approximate repeat. 5 disulfide bridges follow: Cys627-Cys880, Cys776-Cys789, Cys799-Cys822, Cys806-Cys815, and Cys844-Cys851. A glycan (N-linked (GlcNAc...) asparagine) is linked at Asn659. Ser715 is an active-site residue. Asp921 is a catalytic residue. Cys924 lines the substrate pocket. The active site involves His978. Met979 is a binding site for substrate.

The protein belongs to the peptidase S10 family. Heterodimer of two subunits of 32 kDa and 19 kDa derived from the precursor protein and linked by a disulfide bond.

The protein resides in the vacuole. It catalyses the reaction Release of a C-terminal amino acid with broad specificity.. In terms of biological role, involved in degradation of small peptides. Digests preferentially peptides containing an aliphatic or hydrophobic residue in P1' position, as well as methionine, leucine or phenylalanine in P1 position of ester substrate. The polypeptide is Carboxypeptidase Y (cpy1) (Schizosaccharomyces pombe (strain 972 / ATCC 24843) (Fission yeast)).